A 503-amino-acid polypeptide reads, in one-letter code: Glutamate--tRNA ligase (503 aa).

The 'HIGH' region signature appears at 26 to 36; the sequence is PSPTGTPHVGL. Positions 126 to 148 are disordered; it reads TPEEVEARHRAAGRDPKLGYDNA. A compositionally biased stretch (basic and acidic residues) spans 130 to 148; that stretch reads VEARHRAAGRDPKLGYDNA. The 'KMSKS' region motif lies at 270 to 274; that stretch reads KLSKR. Residue lysine 273 coordinates ATP.

Belongs to the class-I aminoacyl-tRNA synthetase family. Glutamate--tRNA ligase type 1 subfamily. As to quaternary structure, monomer.

It localises to the cytoplasm. The catalysed reaction is tRNA(Glu) + L-glutamate + ATP = L-glutamyl-tRNA(Glu) + AMP + diphosphate. Catalyzes the attachment of glutamate to tRNA(Glu) in a two-step reaction: glutamate is first activated by ATP to form Glu-AMP and then transferred to the acceptor end of tRNA(Glu). In Saccharopolyspora erythraea (strain ATCC 11635 / DSM 40517 / JCM 4748 / NBRC 13426 / NCIMB 8594 / NRRL 2338), this protein is Glutamate--tRNA ligase.